Consider the following 257-residue polypeptide: Beta-fibrinogenase mucrofibrase-5 (257 aa).

The signal sequence occupies residues 1–18 (MVLIRVLANLLILQLSYA). The propeptide occupies 19–24 (QKSSEL). The region spanning 25–248 (IIGGDECNIN…HLDWIKGIIA (224 aa)) is the Peptidase S1 domain. 6 disulfides stabilise this stretch: Cys-31–Cys-162, Cys-49–Cys-65, Cys-97–Cys-255, Cys-141–Cys-209, Cys-173–Cys-188, and Cys-199–Cys-224. The Charge relay system role is filled by His-64. Asn-102 is a glycosylation site (N-linked (GlcNAc...) asparagine). The active-site Charge relay system is Asp-109. The active-site Charge relay system is Ser-203.

This sequence belongs to the peptidase S1 family. Snake venom subfamily. As to quaternary structure, monomer. Expressed by the venom gland.

It is found in the secreted. Snake venom serine protease with strong beta-fibrinogenolytic activities, angiotensin I (AGT)-degrading activities and strong kallikrein-like activities in vitro, releasing bradykinin from kininogen (KNG1). Intravenous injection mildly lowers blood pressure in experimental rats, which may be explained by the action on angiotensin I and kininogen. Exhibits amidase activity against N-benzoyl-Pro-Phe-Arg-p-nitroanilide in vitro. The polypeptide is Beta-fibrinogenase mucrofibrase-5 (Protobothrops mucrosquamatus (Taiwan habu)).